We begin with the raw amino-acid sequence, 245 residues long: Eukaryotic translation initiation factor 6 (245 aa).

A Phosphotyrosine modification is found at Tyr-113. Position 165 is a phosphothreonine (Thr-165). At Ser-166 the chain carries Phosphoserine. Residues Ser-174 and Ser-175 each carry the phosphoserine; by CK1 modification. Ser-235 bears the Phosphoserine; by PKC mark. Phosphoserine is present on residues Ser-239 and Ser-243.

This sequence belongs to the eIF-6 family. In terms of assembly, monomer. Associates with the 60S ribosomal subunit. Interacts with RACK1. Interacts with DICER1, AGO2, TARBP2, MOV10 and RPL7A; they form a large RNA-induced silencing complex (RISC). In terms of processing, phosphorylation at Ser-174 and Ser-175 by CSNK1D/CK1 promotes nuclear export. Ufmylated by UFL1.

The protein resides in the cytoplasm. Its subcellular location is the nucleus. It is found in the nucleolus. Its function is as follows. Binds to the 60S ribosomal subunit and prevents its association with the 40S ribosomal subunit to form the 80S initiation complex in the cytoplasm. Behaves as a stimulatory translation initiation factor downstream insulin/growth factors. Is also involved in ribosome biogenesis. Associates with pre-60S subunits in the nucleus and is involved in its nuclear export. Cytoplasmic release of TIF6 from 60S subunits and nuclear relocalization is promoted by a RACK1 (RACK1)-dependent protein kinase C activity. In tissues responsive to insulin, controls fatty acid synthesis and glycolysis by exerting translational control of adipogenic transcription factors such as CEBPB, CEBPD and ATF4 that have G/C rich or uORF in their 5'UTR. Required for ROS-dependent megakaryocyte maturation and platelets formation, controls the expression of mitochondrial respiratory chain genes involved in reactive oxygen species (ROS) synthesis. Involved in miRNA-mediated gene silencing by the RNA-induced silencing complex (RISC). Required for both miRNA-mediated translational repression and miRNA-mediated cleavage of complementary mRNAs by RISC. Modulates cell cycle progression and global translation of pre-B cells, its activation seems to be rate-limiting in tumorigenesis and tumor growth. This Bos taurus (Bovine) protein is Eukaryotic translation initiation factor 6.